A 781-amino-acid chain; its full sequence is Sialidase (781 aa).

Positions Met1 to Ala24 are cleaved as a signal peptide. Position 224 (Arg224) interacts with substrate. Residue Asp250 is the Proton acceptor of the active site. 2 BNR repeats span residues Arg263 to Thr274 and Ile585 to Thr596. The active site involves Glu619. Position 635 (Arg635) interacts with substrate. Residues Phe653–Leu664 form a BNR 3 repeat. Arg712 lines the substrate pocket. A BNR 4 repeat occupies Trp718–Gly729. The active-site Nucleophile is Tyr740.

Belongs to the glycosyl hydrolase 33 family. As to quaternary structure, monomer. It depends on Ca(2+) as a cofactor.

It is found in the secreted. It carries out the reaction Hydrolysis of alpha-(2-&gt;3)-, alpha-(2-&gt;6)-, alpha-(2-&gt;8)- glycosidic linkages of terminal sialic acid residues in oligosaccharides, glycoproteins, glycolipids, colominic acid and synthetic substrates.. Cleaves the terminal sialic acid (N-acetyl neuraminic acid) from carbohydrate chains in glycoproteins providing free sialic acid which can be used as carbon and energy sources. Sialidases have been suggested to be pathogenic factors in microbial infections. Facilitates cholera toxin binding to host intestinal epithelial cells by converting cell surface polysialogangliosides to GM1 monogangliosides. The protein is Sialidase (nanH) of Vibrio cholerae serotype O1 (strain ATCC 39541 / Classical Ogawa 395 / O395).